A 335-amino-acid polypeptide reads, in one-letter code: MNPVDLIIKRAYPYETEKRDRIYLALNENPFPFPKELTEEVFRKLEGDKMRIYYDSPDEELIEKILEYLDADFLRENNVSIGNGADEIIYVMMLMFERAVFFPPTYSCYRIFAKAVGAKYLEIPLTKYLKIPEVDVGEGDVVFIPNPNNPTGHVFEREEIEKILKKGAFVALDEAYYEFHGESYIDLLKEYENLAIIRTFSKAFSLAAQRIGYVISSEKFIDAYNRVRLPFNVSYVSQTFAKVALEHIDIFKERIEYIVSERERMKKALKELNYSISDSRGNFVFIFMDRKEQNKLIEQLRQKNIAVRSFREGVRITIGKREENETILKELEVFR.

K202 carries the post-translational modification N6-(pyridoxal phosphate)lysine.

This sequence belongs to the class-II pyridoxal-phosphate-dependent aminotransferase family. Histidinol-phosphate aminotransferase subfamily. Homodimer. The cofactor is pyridoxal 5'-phosphate.

It catalyses the reaction L-histidinol phosphate + 2-oxoglutarate = 3-(imidazol-4-yl)-2-oxopropyl phosphate + L-glutamate. The protein operates within amino-acid biosynthesis; L-histidine biosynthesis; L-histidine from 5-phospho-alpha-D-ribose 1-diphosphate: step 7/9. The protein is Histidinol-phosphate aminotransferase of Thermotoga neapolitana (strain ATCC 49049 / DSM 4359 / NBRC 107923 / NS-E).